Consider the following 294-residue polypeptide: ATP synthase gamma chain (294 aa).

The protein belongs to the ATPase gamma chain family. In terms of assembly, F-type ATPases have 2 components, CF(1) - the catalytic core - and CF(0) - the membrane proton channel. CF(1) has five subunits: alpha(3), beta(3), gamma(1), delta(1), epsilon(1). CF(0) has three main subunits: a, b and c.

The protein localises to the cell inner membrane. Functionally, produces ATP from ADP in the presence of a proton gradient across the membrane. The gamma chain is believed to be important in regulating ATPase activity and the flow of protons through the CF(0) complex. The protein is ATP synthase gamma chain of Rhizobium rhizogenes (strain K84 / ATCC BAA-868) (Agrobacterium radiobacter).